The following is a 208-amino-acid chain: uncharacterized protein (208 aa).

The J domain maps to 4–71; it reads DYYAILNITP…SRRAQYDRES (68 aa). The interval 67–100 is disordered; that stretch reads YDRESASSSAKPRQSFFSRTNPQPQSQSQQGGPS. A compositionally biased stretch (polar residues) spans 72 to 87; that stretch reads ASSSAKPRQSFFSRTN. A compositionally biased stretch (low complexity) spans 88 to 100; it reads PQPQSQSQQGGPS. The chain crosses the membrane as a helical span at residues 127-147; that stretch reads GIANAFWTIVGTLAGAALGFI.

Belongs to the DnaJ family.

The protein localises to the endoplasmic reticulum membrane. This is an uncharacterized protein from Schizosaccharomyces pombe (strain 972 / ATCC 24843) (Fission yeast).